Here is a 592-residue protein sequence, read N- to C-terminus: Probable auxin efflux carrier component 1c (592 aa).

The Extracellular portion of the chain corresponds to 1-6 (MITGAD). Residues 7-27 (FYHVMTAMVPLYVAMILAYGS) traverse the membrane as a helical segment. Over 28–38 (VKWWRIFTPDQ) the chain is Cytoplasmic. Residues 39-59 (CSGINRFVALFAVPLLSFHFI) form a helical membrane-spanning segment. (indol-3-yl)acetate is bound at residue Val51. At 60–70 (STNNPYTMNLR) the chain is on the extracellular side. Residues 71-91 (FIAADTLQKLIVLALLTLWSH) form a helical membrane-spanning segment. Residues 92 to 100 (LSRRGSLEW) lie on the Cytoplasmic side of the membrane. Residues 101-121 (TITLFSLSTLPNTLVMGIPLL) traverse the membrane as a helical segment. Residues Asn112 and Leu114 each contribute to the (indol-3-yl)acetate site. Over 122–131 (KGMYGEFSGS) the chain is Extracellular. Residues 132 to 152 (LMVQIVVLQCIIWYTLMLFMF) form a helical membrane-spanning segment. A (indol-3-yl)acetate-binding site is contributed by Tyr145. Topologically, residues 153-452 (EYRGARILIT…LIRNPNTYSS (300 aa)) are cytoplasmic. Disordered regions lie at residues 214-236 (RSDV…SNLT) and 282-331 (GATP…AKGE). Residues 224–236 (GFSSTTPRPSNLT) show a composition bias toward polar residues. Positions 309 to 318 (APNPAMAAPP) are enriched in pro residues. Residues 453 to 473 (LIGLIWSLVCFRWNFEMPAII) traverse the membrane as a helical segment. The Extracellular segment spans residues 474-476 (LKS). The chain crosses the membrane as a helical span at residues 477–497 (ISILSDAGLGMAMFSLGLFMA). Over 498 to 511 (LQPRIIACGNKVAT) the chain is Cytoplasmic. A helical membrane pass occupies residues 512–532 (FAMAVRFLTGPAVMAAASIAV). Residues 533 to 537 (GLRGT) lie on the Extracellular side of the membrane. The chain crosses the membrane as a helical span at residues 538–558 (LLHVAIVQAALPQGIVPFVFA). (indol-3-yl)acetate contacts are provided by Ile552 and Val553. At 559–571 (KEYSVHPDILSTA) the chain is on the cytoplasmic side. A helical transmembrane segment spans residues 572 to 592 (VIFGMLIALPITLVYYILLGL).

It belongs to the auxin efflux carrier (TC 2.A.69.1) family. As to quaternary structure, homodimer. Expressed at low levels in roots and leaves. Expressed in roots, stem bases, stems, leaves and young panicles.

It localises to the membrane. May act as a component of the auxin efflux carrier. The sequence is that of Probable auxin efflux carrier component 1c from Oryza sativa subsp. japonica (Rice).